The sequence spans 850 residues: Pentatricopeptide repeat-containing protein At3g49170, chloroplastic (850 aa).

The N-terminal 50 residues, 1 to 50 (MAMISFSFPSPAKLPIKSQPSVSNRINVADRLILRHLNAGDLRGAVSALD), are a transit peptide targeting the chloroplast. PPR repeat units lie at residues 61-95 (DSVTFSSLLKSCIRARDFRLGKLVHARLIEFDIEP), 96-130 (DSVLYNSLISLYSKSGDSAKAEDVFETMRRFGKRD), 131-164 (VVSWSAMMACYGNNGRELDAIKVFVEFLELGLVP), 165-199 (NDYCYTAVIRACSNSDFVGVGRVTLGFLMKTGHFE), 201-232 (DVCVGCSLIDMFVKGENSFENAYKVFDKMSEL), 233-267 (NVVTWTLMITRCMQMGFPREAIRFFLDMVLSGFES), 268-302 (DKFTLSSVFSACAELENLSLGKQLHSWAIRSGLVD), 303-334 (DVECSLVDMYAKCSADGSVDDCRKVFDRMEDH), 335-370 (SVMSWTALITGYMKNCNLATEAINLFSEMITQGHVE), 372-406 (NHFTFSSAFKACGNLSDPRVGKQVLGQAFKRGLAS), 407-437 (NSSVANSVISMFVKSDRMEDAQRAFESLSEK), 438-472 (NLVSYNTFLDGTCRNLNFEQAFKLLSEITERELGV), 473-507 (SAFTFASLLSGVANVGSIRKGEQIHSQVVKLGLSC), 508-538 (NQPVCNALISMYSKCGSIDTASRVFNFMENR), 539-573 (NVISWTSMITGFAKHGFAIRVLETFNQMIEEGVKP), 574-609 (NEVTYVAILSACSHVGLVSEGWRHFNSMYEDHKIKP), and 610-640 (KMEHYACMVDLLCRAGLLTDAFEFINTMPFQ). The segment at 645–720 (VWRTFLGACR…EGGCSWIEVG (76 aa)) is type E motif. A type E(+) motif region spans residues 721–751 (DKIHKFYVGDTAHPNAHQIYDELDRLITEIK). Residues 752–850 (RCGYVPDTDL…DGKCSCNDYW (99 aa)) form a type DYW motif region.

This sequence belongs to the PPR family. PCMP-H subfamily.

Its subcellular location is the plastid. It is found in the chloroplast. In terms of biological role, may play a role in embryogenesis. The sequence is that of Pentatricopeptide repeat-containing protein At3g49170, chloroplastic (EMB2261) from Arabidopsis thaliana (Mouse-ear cress).